The following is a 120-amino-acid chain: Inner membrane protein YidG (120 aa).

Residues Met-1 to Ser-21 are Cytoplasmic-facing. The helical transmembrane segment at Leu-22 to Ile-39 threads the bilayer. At Lys-40 to Met-48 the chain is on the periplasmic side. A helical transmembrane segment spans residues Leu-49–Thr-68. Topologically, residues Arg-69–Lys-90 are cytoplasmic. A helical membrane pass occupies residues Phe-91–Ile-113. Over Val-114–Ala-120 the chain is Periplasmic.

The protein resides in the cell inner membrane. The protein is Inner membrane protein YidG (yidG) of Escherichia coli O157:H7.